Here is an 87-residue protein sequence, read N- to C-terminus: Putative defensin-like protein 235 (87 aa).

The first 26 residues, Met1–Ala26, serve as a signal peptide directing secretion. 3 disulfide bridges follow: Cys46–Cys73, Cys54–Cys82, and Cys71–Cys84.

Belongs to the DEFL family.

Its subcellular location is the secreted. In Arabidopsis thaliana (Mouse-ear cress), this protein is Putative defensin-like protein 235 (SCRL26).